The following is a 119-amino-acid chain: U9-hexatoxin-Hi1 (119 aa).

The signal sequence occupies residues 1-17; sequence MKLYLVILVTSVALAAA. A propeptide spanning residues 18–53 is cleaved from the precursor; it reads SPTRTKEEPIEDELLEALLSVEKSLFNEETTVMEKR. 4 disulfides stabilise this stretch: Cys55-Cys73, Cys66-Cys79, Cys70-Cys117, and Cys72-Cys88.

The protein belongs to the neurotoxin 03 (Tx2) family. 03 subfamily. In terms of tissue distribution, expressed by the venom gland.

It localises to the secreted. In terms of biological role, probable ion channel inhibitor. The chain is U9-hexatoxin-Hi1 from Hadronyche infensa (Fraser island funnel-web spider).